The chain runs to 360 residues: S-adenosylmethionine:tRNA ribosyltransferase-isomerase (360 aa).

This sequence belongs to the QueA family. As to quaternary structure, monomer.

It localises to the cytoplasm. The catalysed reaction is 7-aminomethyl-7-carbaguanosine(34) in tRNA + S-adenosyl-L-methionine = epoxyqueuosine(34) in tRNA + adenine + L-methionine + 2 H(+). It functions in the pathway tRNA modification; tRNA-queuosine biosynthesis. In terms of biological role, transfers and isomerizes the ribose moiety from AdoMet to the 7-aminomethyl group of 7-deazaguanine (preQ1-tRNA) to give epoxyqueuosine (oQ-tRNA). The chain is S-adenosylmethionine:tRNA ribosyltransferase-isomerase from Rhodopseudomonas palustris (strain ATCC BAA-98 / CGA009).